Here is a 309-residue protein sequence, read N- to C-terminus: Porphobilinogen deaminase (309 aa).

At C241 the chain carries S-(dipyrrolylmethanemethyl)cysteine.

This sequence belongs to the HMBS family. In terms of assembly, monomer. Dipyrromethane serves as cofactor.

The enzyme catalyses 4 porphobilinogen + H2O = hydroxymethylbilane + 4 NH4(+). It functions in the pathway porphyrin-containing compound metabolism; protoporphyrin-IX biosynthesis; coproporphyrinogen-III from 5-aminolevulinate: step 2/4. Tetrapolymerization of the monopyrrole PBG into the hydroxymethylbilane pre-uroporphyrinogen in several discrete steps. The protein is Porphobilinogen deaminase of Bacillus thuringiensis subsp. konkukian (strain 97-27).